Consider the following 72-residue polypeptide: Translation initiation factor IF-1 (72 aa).

One can recognise an S1-like domain in the interval 1 to 72 (MAKEEAITVD…SKGRITYRKK (72 aa)).

It belongs to the IF-1 family. In terms of assembly, component of the 30S ribosomal translation pre-initiation complex which assembles on the 30S ribosome in the order IF-2 and IF-3, IF-1 and N-formylmethionyl-tRNA(fMet); mRNA recruitment can occur at any time during PIC assembly.

The protein resides in the cytoplasm. Its function is as follows. One of the essential components for the initiation of protein synthesis. Stabilizes the binding of IF-2 and IF-3 on the 30S subunit to which N-formylmethionyl-tRNA(fMet) subsequently binds. Helps modulate mRNA selection, yielding the 30S pre-initiation complex (PIC). Upon addition of the 50S ribosomal subunit IF-1, IF-2 and IF-3 are released leaving the mature 70S translation initiation complex. This is Translation initiation factor IF-1 from Leptospira borgpetersenii serovar Hardjo-bovis (strain L550).